Reading from the N-terminus, the 431-residue chain is Adenylosuccinate synthetase (431 aa).

Residues 12–18 (GDEGKGK) and 40–42 (GHT) contribute to the GTP site. Asp13 serves as the catalytic Proton acceptor. Mg(2+) contacts are provided by Asp13 and Gly40. Residues 13–16 (DEGK), 38–41 (NAGH), Thr130, Arg144, Gln224, Thr239, and Arg303 each bind IMP. The active-site Proton donor is the His41. Residue 299–305 (STTGRPR) coordinates substrate. Residues Arg305, 331–333 (KAD), and 413–415 (SIG) contribute to the GTP site.

The protein belongs to the adenylosuccinate synthetase family. In terms of assembly, homodimer. Mg(2+) serves as cofactor.

It localises to the cytoplasm. It catalyses the reaction IMP + L-aspartate + GTP = N(6)-(1,2-dicarboxyethyl)-AMP + GDP + phosphate + 2 H(+). It functions in the pathway purine metabolism; AMP biosynthesis via de novo pathway; AMP from IMP: step 1/2. Functionally, plays an important role in the de novo pathway of purine nucleotide biosynthesis. Catalyzes the first committed step in the biosynthesis of AMP from IMP. This is Adenylosuccinate synthetase from Cytophaga hutchinsonii (strain ATCC 33406 / DSM 1761 / CIP 103989 / NBRC 15051 / NCIMB 9469 / D465).